We begin with the raw amino-acid sequence, 490 residues long: ATP synthase subunit beta (490 aa).

173–180 (GGAGVGKT) contributes to the ATP binding site.

This sequence belongs to the ATPase alpha/beta chains family. In terms of assembly, F-type ATPases have 2 components, CF(1) - the catalytic core - and CF(0) - the membrane proton channel. CF(1) has five subunits: alpha(3), beta(3), gamma(1), delta(1), epsilon(1). CF(0) has three main subunits: a(1), b(2) and c(9-12). The alpha and beta chains form an alternating ring which encloses part of the gamma chain. CF(1) is attached to CF(0) by a central stalk formed by the gamma and epsilon chains, while a peripheral stalk is formed by the delta and b chains.

The protein localises to the cell membrane. The enzyme catalyses ATP + H2O + 4 H(+)(in) = ADP + phosphate + 5 H(+)(out). In terms of biological role, produces ATP from ADP in the presence of a proton gradient across the membrane. The catalytic sites are hosted primarily by the beta subunits. This Bifidobacterium longum subsp. infantis (strain ATCC 15697 / DSM 20088 / JCM 1222 / NCTC 11817 / S12) protein is ATP synthase subunit beta.